The following is a 162-amino-acid chain: Cyclic pyranopterin monophosphate synthase (162 aa).

Substrate is bound by residues 75–77 (LCH) and 113–114 (ME). Asp-128 is a catalytic residue.

It belongs to the MoaC family. In terms of assembly, homohexamer; trimer of dimers.

It carries out the reaction (8S)-3',8-cyclo-7,8-dihydroguanosine 5'-triphosphate = cyclic pyranopterin phosphate + diphosphate. It participates in cofactor biosynthesis; molybdopterin biosynthesis. Its function is as follows. Catalyzes the conversion of (8S)-3',8-cyclo-7,8-dihydroguanosine 5'-triphosphate to cyclic pyranopterin monophosphate (cPMP). The polypeptide is Cyclic pyranopterin monophosphate synthase (Burkholderia vietnamiensis (strain G4 / LMG 22486) (Burkholderia cepacia (strain R1808))).